The sequence spans 99 residues: Osteocalcin (99 aa).

A signal peptide spans 1 to 23 (MRTLSLLTLLALTAFCLSDLAGA). Residues 24-49 (KPSDSESDKAFMSKQEGSKVVNRLRR) constitute a propeptide that is removed on maturation. A Gla domain is found at 50–96 (YLNNGLGAPAPYPDPLEPHREVCELNPNCDELADHIGFQDAYKRIYG). Position 58 is a hydroxyproline (Pro58). Ca(2+) contacts are provided by Glu66, Glu70, Glu73, and Asp79. 4-carboxyglutamate is present on residues Glu66, Glu70, and Glu73. A disulfide bond links Cys72 and Cys78.

This sequence belongs to the osteocalcin/matrix Gla protein family. In terms of processing, gamma-carboxyglutamate residues are formed by vitamin K dependent carboxylation by GGCX. These residues are essential for the binding of calcium. Decarboxylation promotes the hormone activity.

Its subcellular location is the secreted. The carboxylated form is one of the main organic components of the bone matrix, which constitutes 1-2% of the total bone protein: it acts as a negative regulator of bone formation and is required to limit bone formation without impairing bone resorption or mineralization. The carboxylated form binds strongly to apatite and calcium. In terms of biological role, the uncarboxylated form acts as a hormone secreted by osteoblasts, which regulates different cellular processes, such as energy metabolism, male fertility and brain development. Regulates of energy metabolism by acting as a hormone favoring pancreatic beta-cell proliferation, insulin secretion and sensitivity and energy expenditure. Uncarboxylated osteocalcin hormone also promotes testosterone production in the testes: acts as a ligand for G protein-coupled receptor GPRC6A at the surface of Leydig cells, initiating a signaling response that promotes the expression of enzymes required for testosterone synthesis in a CREB-dependent manner. Also acts as a regulator of brain development: osteocalcin hormone crosses the blood-brain barrier and acts as a ligand for GPR158 on neurons, initiating a signaling response that prevents neuronal apoptosis in the hippocampus, favors the synthesis of all monoamine neurotransmitters and inhibits that of gamma-aminobutyric acid (GABA). Osteocalcin also crosses the placenta during pregnancy and maternal osteocalcin is required for fetal brain development. This Rattus norvegicus (Rat) protein is Osteocalcin (Bglap).